A 368-amino-acid chain; its full sequence is MNLKLLSSVAFAATIGFASAAYADITIGVIAPLTGPVAAFGDQVKKGAETAVEVINKAGGIKGEKVVLKFADDAGEPKQGVSAANQIVGDGIKFVVGLVTTGVAVPVSDVLSENGVLMVTPTATGPDLTARGLENVFRTCGRDGQQAEVMADYVLKNMKDKKVAVIHDKGAYGKGLADAFKAAINKGGITEVHYDSVTPGDKDFSALVTKLKSAGAEVVYFGGYHAEGGLLSRQLHDAGMQALVLGGEGLSNTEYWAIGGTNAQGTLFTNAKDATKNPAAKDAIQALKAKNIPAEAFTMNAYAAVEVIKAGIERAGSTDDSAAVAKALHDGKPIETAIGTLTYSETGDLSSPSFDIFKWDDGKIVGLE.

The N-terminal stretch at 1–23 (MNLKLLSSVAFAATIGFASAAYA) is a signal peptide.

Belongs to the leucine-binding protein family.

Functionally, component of an amino-acid transport system. This Brucella melitensis biotype 1 (strain ATCC 23456 / CCUG 17765 / NCTC 10094 / 16M) protein is Leu/Ile/Val-binding protein homolog 3.